The sequence spans 91 residues: MEKVRLTAWVRGHVQGVGFRWWTRARALELGLTGAATNLDDGRVEVVAEGDRTACERLLELLRSGQTPGRVDSVVERWTNHRGSFTGFEER.

In terms of domain architecture, Acylphosphatase-like spans 5 to 91; that stretch reads RLTAWVRGHV…RGSFTGFEER (87 aa). Catalysis depends on residues Arg-20 and Asn-38.

This sequence belongs to the acylphosphatase family.

The catalysed reaction is an acyl phosphate + H2O = a carboxylate + phosphate + H(+). The sequence is that of Acylphosphatase (acyP) from Thermobifida fusca (strain YX).